The following is a 103-amino-acid chain: Large ribosomal subunit protein bL21 (103 aa).

Belongs to the bacterial ribosomal protein bL21 family. In terms of assembly, part of the 50S ribosomal subunit. Contacts protein L20.

Functionally, this protein binds to 23S rRNA in the presence of protein L20. This Acinetobacter baylyi (strain ATCC 33305 / BD413 / ADP1) protein is Large ribosomal subunit protein bL21.